The following is a 360-amino-acid chain: DNA replication and repair protein RecF (360 aa).

An ATP-binding site is contributed by 30–37; sequence GNNGSGKT.

This sequence belongs to the RecF family.

Its subcellular location is the cytoplasm. In terms of biological role, the RecF protein is involved in DNA metabolism; it is required for DNA replication and normal SOS inducibility. RecF binds preferentially to single-stranded, linear DNA. It also seems to bind ATP. The polypeptide is DNA replication and repair protein RecF (Mannheimia succiniciproducens (strain KCTC 0769BP / MBEL55E)).